The sequence spans 32 residues: MSDINATRLPIFWFIYFPCVSDVDSTLTRGER.

Positions 1–10 (MSDINATRLP) are excised as a propeptide. The segment at residues 11–18 (IFWFIYFP) is a cross-link (cyclopeptide (Ile-Pro)). A propeptide spanning residues 19–32 (CVSDVDSTLTRGER) is cleaved from the precursor.

The protein belongs to the MSDIN fungal toxin family. Processed by the macrocyclase-peptidase enzyme POPB to yield a toxic cyclic octapeptide. POPB first removes 10 residues from the N-terminus. Conformational trapping of the remaining peptide forces the enzyme to release this intermediate rather than proceed to macrocyclization. The enzyme rebinds the remaining peptide in a different conformation and catalyzes macrocyclization of the N-terminal 8 residues. In terms of tissue distribution, expressed in basidiocarps.

Probable toxin that belongs to the MSDIN-like toxin family responsible for a large number of food poisoning cases and deaths. The sequence is that of MSDIN-like toxin proprotein 1 from Amanita exitialis (Guangzhou destroying angel).